Consider the following 166-residue polypeptide: Crossover junction endodeoxyribonuclease RuvC (166 aa).

Residues Asp-11, Glu-70, and Asp-142 contribute to the active site. Mg(2+) contacts are provided by Asp-11, Glu-70, and Asp-142.

The protein belongs to the RuvC family. In terms of assembly, homodimer which binds Holliday junction (HJ) DNA. The HJ becomes 2-fold symmetrical on binding to RuvC with unstacked arms; it has a different conformation from HJ DNA in complex with RuvA. In the full resolvosome a probable DNA-RuvA(4)-RuvB(12)-RuvC(2) complex forms which resolves the HJ. Mg(2+) is required as a cofactor.

It localises to the cytoplasm. It carries out the reaction Endonucleolytic cleavage at a junction such as a reciprocal single-stranded crossover between two homologous DNA duplexes (Holliday junction).. In terms of biological role, the RuvA-RuvB-RuvC complex processes Holliday junction (HJ) DNA during genetic recombination and DNA repair. Endonuclease that resolves HJ intermediates. Cleaves cruciform DNA by making single-stranded nicks across the HJ at symmetrical positions within the homologous arms, yielding a 5'-phosphate and a 3'-hydroxyl group; requires a central core of homology in the junction. The consensus cleavage sequence is 5'-(A/T)TT(C/G)-3'. Cleavage occurs on the 3'-side of the TT dinucleotide at the point of strand exchange. HJ branch migration catalyzed by RuvA-RuvB allows RuvC to scan DNA until it finds its consensus sequence, where it cleaves and resolves the cruciform DNA. The sequence is that of Crossover junction endodeoxyribonuclease RuvC from Nitratidesulfovibrio vulgaris (strain DP4) (Desulfovibrio vulgaris).